The sequence spans 215 residues: Leucyl/phenylalanyl-tRNA--protein transferase (215 aa).

This sequence belongs to the L/F-transferase family.

The protein resides in the cytoplasm. The enzyme catalyses N-terminal L-lysyl-[protein] + L-leucyl-tRNA(Leu) = N-terminal L-leucyl-L-lysyl-[protein] + tRNA(Leu) + H(+). It carries out the reaction N-terminal L-arginyl-[protein] + L-leucyl-tRNA(Leu) = N-terminal L-leucyl-L-arginyl-[protein] + tRNA(Leu) + H(+). The catalysed reaction is L-phenylalanyl-tRNA(Phe) + an N-terminal L-alpha-aminoacyl-[protein] = an N-terminal L-phenylalanyl-L-alpha-aminoacyl-[protein] + tRNA(Phe). Its function is as follows. Functions in the N-end rule pathway of protein degradation where it conjugates Leu, Phe and, less efficiently, Met from aminoacyl-tRNAs to the N-termini of proteins containing an N-terminal arginine or lysine. The polypeptide is Leucyl/phenylalanyl-tRNA--protein transferase (Campylobacter jejuni (strain RM1221)).